The sequence spans 30 residues: Photosystem I reaction center subunit XII (30 aa).

The helical transmembrane segment at 7–29 threads the bilayer; the sequence is VYIALMAALLASVLAIRLGATLY.

This sequence belongs to the PsaM family.

The protein localises to the plastid. It is found in the chloroplast thylakoid membrane. In Thalassiosira pseudonana (Marine diatom), this protein is Photosystem I reaction center subunit XII.